We begin with the raw amino-acid sequence, 503 residues long: MAITVSSRQLFIDGEWRVPILNKRIPNINPSTENIIGDIPAATKEDVDLAVDAAKRAISRKNGRDWSAASGSLRARYLRAIAAKIKEKKDELGKLESIDCGKPLEEALADLDDVVACFEYYAGLAEELDSKQKAPISLPMDTFKSYILKEPIGVVALITPWNYPFLMATWKIAPALAAGCAAILKPSELASVTCLELGEICKEVGLPRGVLNIVTGLGHEAGASLASHPDVDKISFTGSSATGSKIMTTAAQLVKPVSLELGGKSPIVVFEDVDLDKVAEWTVFGCFFTNGQICSATSRLIVHESIAVEFVDKLVKWAENIKISDPLEEGCRLGPIVSEAQYKKVLNCISSAKSEGATILTGGRRPEHLKKGYFVEPTIITDVTTSMQIWREEVFGPVLAVKTFSTEEEAINLANDTHYGLGSAVMSNDLERCERLSKALQAGIVWINCAQPSFIQAPWGGIKRSGFGRELGEWGLENYLSVKQVTRYTSDEPWGWYQPPSKL.

Residues asparagine 27, isoleucine 28, aspartate 99, and leucine 189 each coordinate Na(+). Residue 238–245 (GSSATGSK) participates in NAD(+) binding. Glutamate 260 (proton acceptor) is an active-site residue. 2 residues coordinate NAD(+): cysteine 294 and glutamate 393. Cysteine 294 acts as the Nucleophile in catalysis. Residues 501–503 (SKL) carry the Microbody targeting signal motif.

This sequence belongs to the aldehyde dehydrogenase family. As to quaternary structure, forms homodimers.

The protein resides in the peroxisome. It catalyses the reaction 3-aminopropanal + NAD(+) + H2O = beta-alanine + NADH + 2 H(+). The catalysed reaction is 4-aminobutanal + NAD(+) + H2O = 4-aminobutanoate + NADH + 2 H(+). The enzyme catalyses 4-guanidinobutanal + NAD(+) + H2O = 4-guanidinobutanoate + NADH + 2 H(+). It participates in amine and polyamine biosynthesis; betaine biosynthesis via choline pathway; betaine from betaine aldehyde: step 1/1. Functionally, dehydrogenase that catalyzes the oxidation of several aminoaldehydes. Metabolizes and detoxifies aldehyde products of polyamine degradation to non-toxic amino acids. Catalyzes the oxidation of 3-aminopropanal to beta-alanine. Catalyzes the oxidation of 4-aminobutanal to 4-aminobutanoate. Catalyzes the oxidation of 4-guanidinobutanal to 4-guanidinobutanoate. The polypeptide is Aminoaldehyde dehydrogenase 1, peroxisomal (Pisum sativum (Garden pea)).